A 346-amino-acid polypeptide reads, in one-letter code: Rhomboid protein 1, mitochondrial (346 aa).

The transit peptide at 1-73 directs the protein to the mitochondrion; the sequence is MSGVSSVMLG…RFFSQTSILK (73 aa). 6 consecutive transmembrane segments (helical) span residues 109 to 129, 145 to 165, 203 to 223, 246 to 266, 275 to 295, and 308 to 328; these read SMTI…PYLF, LVYA…LPKC, MLAL…SNFF, LAIV…LGCF, ILLF…ASVA, and FDYA…WYIS. The active-site Nucleophile is the Ser256. His313 is a catalytic residue.

The protein belongs to the peptidase S54 family.

The protein localises to the mitochondrion inner membrane. The enzyme catalyses Cleaves type-1 transmembrane domains using a catalytic dyad composed of serine and histidine that are contributed by different transmembrane domains.. Functionally, mitochondrial rhomboid serine protease processing the mitochondrial membrane fusion regulator MGM1, and the cytochrome c peroxidase (CCP1). Required for TIM11 stability, ATP synthase complex assembly, mitochondrial morphology, cytochrome c (CYC1) storage and mitochondrial genome maintenance. This is Rhomboid protein 1, mitochondrial (PCP1) from Saccharomyces cerevisiae (strain ATCC 204508 / S288c) (Baker's yeast).